Here is a 240-residue protein sequence, read N- to C-terminus: Cysteine-rich venom protein (240 aa).

The N-terminal stretch at 1 to 19 (MIAFIVLPILAAVLHQSSG) is a signal peptide. Residues 39-166 (DLHNSLRRSV…KYRYFYVCQY (128 aa)) form the SCP domain. Cystine bridges form between Cys-75/Cys-153, Cys-92/Cys-167, Cys-148/Cys-164, Cys-186/Cys-193, Cys-189/Cys-198, Cys-202/Cys-235, Cys-211/Cys-229, and Cys-220/Cys-233. A ShKT domain is found at 202 to 235 (CTQENTYSNCNSLVQQSSCQDNNMKTKCPASCFC).

The protein belongs to the CRISP family. In terms of tissue distribution, expressed by the venom gland.

Its subcellular location is the secreted. Functionally, may block ryanodine receptors (RYR). The chain is Cysteine-rich venom protein from Protobothrops mucrosquamatus (Taiwan habu).